The sequence spans 310 residues: tRNA pseudouridine synthase B (310 aa).

Aspartate 38 functions as the Nucleophile in the catalytic mechanism.

The protein belongs to the pseudouridine synthase TruB family. Type 1 subfamily.

It catalyses the reaction uridine(55) in tRNA = pseudouridine(55) in tRNA. Responsible for synthesis of pseudouridine from uracil-55 in the psi GC loop of transfer RNAs. The chain is tRNA pseudouridine synthase B from Geotalea uraniireducens (strain Rf4) (Geobacter uraniireducens).